A 583-amino-acid polypeptide reads, in one-letter code: Chromosomal replication initiator protein DnaA (583 aa).

Positions 1-91 (MSNSNFSIEE…KHVLKTRLDL (91 aa)) are domain I, interacts with DnaA modulators. Positions 91–241 (LSVSLAITST…SFNDGLDGES (151 aa)) are domain II. Residues 151-239 (KAEQRDGASQ…SSSFNDGLDG (89 aa)) form a disordered region. Over residues 172–182 (EAARRREHDAD) the composition is skewed to basic and acidic residues. Positions 242-458 (LLNKNYTFEN…GALIRVTAYC (217 aa)) are domain III, AAA+ region. Glycine 286, glycine 288, lysine 289, and threonine 290 together coordinate ATP. The interval 459–583 (ALSHEPLTVE…TQKIKSHARD (125 aa)) is domain IV, binds dsDNA.

The protein belongs to the DnaA family. Oligomerizes as a right-handed, spiral filament on DNA at oriC.

The protein resides in the cytoplasm. Its function is as follows. Plays an essential role in the initiation and regulation of chromosomal replication. ATP-DnaA binds to the origin of replication (oriC) to initiate formation of the DNA replication initiation complex once per cell cycle. Binds the DnaA box (a 9 base pair repeat at the origin) and separates the double-stranded (ds)DNA. Forms a right-handed helical filament on oriC DNA; dsDNA binds to the exterior of the filament while single-stranded (ss)DNA is stabiized in the filament's interior. The ATP-DnaA-oriC complex binds and stabilizes one strand of the AT-rich DNA unwinding element (DUE), permitting loading of DNA polymerase. After initiation quickly degrades to an ADP-DnaA complex that is not apt for DNA replication. Binds acidic phospholipids. The sequence is that of Chromosomal replication initiator protein DnaA from Corynebacterium jeikeium (strain K411).